We begin with the raw amino-acid sequence, 291 residues long: MASKQLKLVIITGMSGAGKTVAMQSLEDLGYFCVDNLPPSLLPKFWELMKESDKMDKIALVMDLRGREFFDSIEPALDELDNTNFITTKILFLEADDKVLVSRYKETRRHHPLEPNGSVLDGINAERELLSDLKGRSQLVINTSNMAPRELRERINNEFQTEDKDIFNVQLMSFGFKYGIPIDADLVFDVRFLPNPHYIDKMRPLTGLDEDVYEYVMKWPETQTFLDKLVDLLMFTLPFYKREGKTQLVIAIGCTGGQHRSVALTEFVGKTIQQKYETTISHRDMKRRKGR.

Position 13 to 20 (13 to 20 (GMSGAGKT)) interacts with ATP. 63–66 (DLRG) contacts GTP.

It belongs to the RapZ-like family.

Its function is as follows. Displays ATPase and GTPase activities. In Listeria monocytogenes serovar 1/2a (strain ATCC BAA-679 / EGD-e), this protein is Nucleotide-binding protein lmo2474.